Here is a 180-residue protein sequence, read N- to C-terminus: uncharacterized protein (180 aa).

A signal peptide spans 1-22; it reads MKLRFISSALAAALFAATGSYA. Cysteine 41 and cysteine 81 are oxidised to a cystine.

This sequence belongs to the fimbrial protein family.

It localises to the fimbrium. This is an uncharacterized protein from Escherichia coli O157:H7.